We begin with the raw amino-acid sequence, 337 residues long: DNA-directed RNA polymerase subunit alpha (337 aa).

The interval 1 to 233 (MIQKNWQELI…DQLSIFVNFE (233 aa)) is alpha N-terminal domain (alpha-NTD). The segment at 249 to 337 (FNPALLKKVD…DLAKRYEDQY (89 aa)) is alpha C-terminal domain (alpha-CTD).

This sequence belongs to the RNA polymerase alpha chain family. In terms of assembly, homodimer. The RNAP catalytic core consists of 2 alpha, 1 beta, 1 beta' and 1 omega subunit. When a sigma factor is associated with the core the holoenzyme is formed, which can initiate transcription.

It carries out the reaction RNA(n) + a ribonucleoside 5'-triphosphate = RNA(n+1) + diphosphate. Functionally, DNA-dependent RNA polymerase catalyzes the transcription of DNA into RNA using the four ribonucleoside triphosphates as substrates. This Brucella ovis (strain ATCC 25840 / 63/290 / NCTC 10512) protein is DNA-directed RNA polymerase subunit alpha.